Here is a 194-residue protein sequence, read N- to C-terminus: Ribosomal RNA large subunit methyltransferase E (194 aa).

Gly-48, Trp-50, Asp-66, Asn-82, and Asp-110 together coordinate S-adenosyl-L-methionine. The active-site Proton acceptor is the Lys-150.

Belongs to the class I-like SAM-binding methyltransferase superfamily. RNA methyltransferase RlmE family.

It localises to the cytoplasm. It carries out the reaction uridine(2552) in 23S rRNA + S-adenosyl-L-methionine = 2'-O-methyluridine(2552) in 23S rRNA + S-adenosyl-L-homocysteine + H(+). Its function is as follows. Specifically methylates the uridine in position 2552 of 23S rRNA at the 2'-O position of the ribose in the fully assembled 50S ribosomal subunit. The protein is Ribosomal RNA large subunit methyltransferase E of Picrophilus torridus (strain ATCC 700027 / DSM 9790 / JCM 10055 / NBRC 100828 / KAW 2/3).